Here is a 994-residue protein sequence, read N- to C-terminus: Zinc finger protein basonuclin-1 (994 aa).

Positions 1–29 (MRRRPPSRGGRGAARARETRRQPRHRSGR) are disordered. A hydrophobic region spans residues 240 to 249 (MTFMLPFQFF). C2H2-type zinc fingers lie at residues 357 to 380 (VFCTACEKTFYDKGTLKIHYNAVH) and 385 to 414 (HKCTIEGCNMVFSSLRSRNRHSANPNPRLH). 2 disordered regions span residues 402-425 (RNRHSANPNPRLHMPMNRNNRDKD) and 444-472 (TVTSPDCRPPPSYPGSGEDSKGQPAFPNI). The Nuclear localization signal motif lies at 533 to 539 (PKKKSRK). Residues Ser-537 and Ser-541 each carry the phosphoserine modification. Residues 555–639 (NEKRHNLSSD…HNSERETEQT (85 aa)) form a disordered region. Acidic residues predominate over residues 563–578 (SDEDMPLQVVSEDEQE). Residues 603-614 (PEGERPCHRESV) show a composition bias toward basic and acidic residues. Positions 615–630 (IESSGAISQTPEQATH) are enriched in polar residues. C2H2-type zinc fingers lie at residues 720–743 (FQCDICKKTFKNACSVKIHHKNMH) and 748–775 (HTCTVEGCNATFPSRRSRDRHSSNLNLH). The segment covering 859–877 (STTSSMKSESSSHSSWDSD) has biased composition (low complexity). A disordered region spans residues 859–881 (STTSSMKSESSSHSSWDSDGVSE). 2 C2H2-type zinc fingers span residues 928–951 (ITCHLCQKTYSNKGTFRAHYKTVH) and 956–983 (HKCKVPGCNTMFSSVRSRNRHSQNPNLH). Residues 970–994 (VRSRNRHSQNPNLHKSLASSPSHLQ) form a disordered region.

In terms of assembly, interacts with HSF2BP (via C-terminus). Post-translationally, phosphorylation on Ser-537 and Ser-541 leads to cytoplasmic localization. As to expression, in epidermis, primarily detected in cells of the basal or immediately suprabasal layers (at protein level). In hair follicles, mainly expressed in the outer root sheath (at protein level). Expressed in epidermis, testis and foreskin, and to a lower extent in thymus, spleen, mammary glands, placenta, brain and heart. Expressed in the ovary, notably in oocytes.

The protein localises to the nucleus. The protein resides in the cytoplasm. Its subcellular location is the nucleoplasm. Functionally, transcriptional activator. It is likely involved in the regulation of keratinocytes terminal differentiation in squamous epithelia and hair follicles. Required for the maintenance of spermatogenesis. It is involved in the positive regulation of oocyte maturation, probably acting through the control of BMP15 levels and regulation of AKT signaling cascade. May also play a role in the early development of embryos. The chain is Zinc finger protein basonuclin-1 (BNC1) from Homo sapiens (Human).